Consider the following 583-residue polypeptide: ATP-dependent lipid A-core flippase (583 aa).

7 helical membrane passes run Leu-18–Ile-38, Ile-65–Phe-85, Leu-105–Met-127, Gly-143–Phe-163, Trp-167–Val-187, Val-252–Ala-272, and Val-277–Met-297. One can recognise an ABC transmembrane type-1 domain in the interval Ile-30–Arg-312. An ABC transporter domain is found at Ile-344–Phe-580. Gly-378–Ser-385 provides a ligand contact to ATP.

Belongs to the ABC transporter superfamily. Lipid exporter (TC 3.A.1.106) family. Homodimer.

It localises to the cell inner membrane. It catalyses the reaction ATP + H2O + lipid A-core oligosaccharideSide 1 = ADP + phosphate + lipid A-core oligosaccharideSide 2.. Functionally, involved in lipopolysaccharide (LPS) biosynthesis. Translocates lipid A-core from the inner to the outer leaflet of the inner membrane. Transmembrane domains (TMD) form a pore in the inner membrane and the ATP-binding domain (NBD) is responsible for energy generation. The chain is ATP-dependent lipid A-core flippase from Blochmanniella floridana.